Consider the following 435-residue polypeptide: Serine carboxypeptidase-like 14 (435 aa).

An N-terminal signal peptide occupies residues 1–23 (MGSWIPKLLLLQLVLLLTKHADS). 3 cysteine pairs are disulfide-bonded: cysteine 82–cysteine 325, cysteine 246–cysteine 260, and cysteine 284–cysteine 291. A glycan (N-linked (GlcNAc...) asparagine) is linked at asparagine 103. Serine 178 is an active-site residue. N-linked (GlcNAc...) asparagine glycosylation is present at asparagine 344. The active site involves aspartate 360. A glycan (N-linked (GlcNAc...) asparagine) is linked at asparagine 376. Residue histidine 413 is part of the active site.

This sequence belongs to the peptidase S10 family. As to expression, expressed in senescent leaves.

It is found in the secreted. In terms of biological role, probable carboxypeptidase. This Arabidopsis thaliana (Mouse-ear cress) protein is Serine carboxypeptidase-like 14 (SCPL14).